The chain runs to 404 residues: Snake venom metalloproteinase H5 (404 aa).

Residues phenylalanine 1–serine 6 form the signal peptide. The propeptide occupies serine 7–lysine 177. The region spanning threonine 184–serine 379 is the Peptidase M12B domain. 3 disulfides stabilise this stretch: cysteine 295-cysteine 374, cysteine 336-cysteine 358, and cysteine 338-cysteine 341. Histidine 320 provides a ligand contact to Zn(2+). Residue glutamate 321 is part of the active site. Zn(2+) contacts are provided by histidine 324 and histidine 330. Residues serine 379–alanine 404 constitute a propeptide that is removed on maturation. The tract at residues valine 385–alanine 404 is disordered. Residues proline 394–alanine 404 show a composition bias toward acidic residues.

As to quaternary structure, monomer. It depends on Zn(2+) as a cofactor. As to expression, expressed by the venom gland.

The protein localises to the secreted. In terms of biological role, this probable venom zinc protease is not hemorrhagic when 3 ug are injected onto the back skin of guinea pig. In Deinagkistrodon acutus (Hundred-pace snake), this protein is Snake venom metalloproteinase H5.